The sequence spans 65 residues: Movement protein TGBp3 (65 aa).

Residues 1–3 are Lumenal-facing; that stretch reads MQA. Residues 4-24 traverse the membrane as a helical segment; the sequence is SGLILVALFSAVVSYLALLHL. The Cytoplasmic portion of the chain corresponds to 25 to 65; that stretch reads SSSSSSCVVVVTGESFRISGCDFTEEFIGFAKTLRVANSQP.

It belongs to the Tymovirales TGBp3 protein family.

The protein resides in the host endoplasmic reticulum membrane. Functionally, plays a role in viral cell-to-cell propagation, by facilitating genome transport to neighboring plant cells through plasmosdesmata. May induce the formation of granular vesicles derived from the Endoplasmic reticulum, which align on actin filaments. The protein is Movement protein TGBp3 of Carnation latent virus (CLV).